We begin with the raw amino-acid sequence, 193 residues long: dCTP deaminase, dUMP-forming (193 aa).

Residues 101-106, Asp-119, 127-129, Gln-148, Tyr-162, and Gln-174 each bind dCTP; these read KSSLGR and TLE. Catalysis depends on Glu-129, which acts as the Proton donor/acceptor.

Belongs to the dCTP deaminase family. In terms of assembly, homotrimer.

The catalysed reaction is dCTP + 2 H2O = dUMP + NH4(+) + diphosphate. Its pathway is pyrimidine metabolism; dUMP biosynthesis; dUMP from dCTP: step 1/1. Bifunctional enzyme that catalyzes both the deamination of dCTP to dUTP and the hydrolysis of dUTP to dUMP without releasing the toxic dUTP intermediate. In Bifidobacterium adolescentis (strain ATCC 15703 / DSM 20083 / NCTC 11814 / E194a), this protein is dCTP deaminase, dUMP-forming.